Reading from the N-terminus, the 98-residue chain is NADH-ubiquinone oxidoreductase chain 4L (98 aa).

3 consecutive transmembrane segments (helical) span residues 1–21 (MSLINMNLMLAFTMSLTGLLM), 29–49 (ALLCLEGMMLSLFTLTTLTIL), and 61–81 (IILLVFAACEAAIGLALLVMI).

Belongs to the complex I subunit 4L family. Core subunit of respiratory chain NADH dehydrogenase (Complex I) which is composed of 45 different subunits.

Its subcellular location is the mitochondrion inner membrane. It carries out the reaction a ubiquinone + NADH + 5 H(+)(in) = a ubiquinol + NAD(+) + 4 H(+)(out). Core subunit of the mitochondrial membrane respiratory chain NADH dehydrogenase (Complex I) which catalyzes electron transfer from NADH through the respiratory chain, using ubiquinone as an electron acceptor. Part of the enzyme membrane arm which is embedded in the lipid bilayer and involved in proton translocation. The chain is NADH-ubiquinone oxidoreductase chain 4L (MT-ND4L) from Platanista minor (Indus river dolphin).